Consider the following 406-residue polypeptide: Peptidase T (406 aa).

A Zn(2+)-binding site is contributed by His78. Asp80 is a catalytic residue. Asp139 contributes to the Zn(2+) binding site. The active-site Proton acceptor is Glu173. Positions 174, 196, and 378 each coordinate Zn(2+).

The protein belongs to the peptidase M20B family. Zn(2+) is required as a cofactor.

The protein localises to the cytoplasm. The enzyme catalyses Release of the N-terminal residue from a tripeptide.. In terms of biological role, cleaves the N-terminal amino acid of tripeptides. In Clostridium perfringens (strain ATCC 13124 / DSM 756 / JCM 1290 / NCIMB 6125 / NCTC 8237 / Type A), this protein is Peptidase T.